Consider the following 692-residue polypeptide: MGKRVYDPIHDTFQLREDNSDETKADSPMQSVKSGSQEEASPSSIQSETETVTTKSIPVIHEIEIDDKNDDDSTQSEEENTNILLNFEPSTVPEATGASTATGPVTTNTVRRKPKESNASKYNRHLKKPDGEPFNRKDIQFSFMQELLMDKRQIFTNVLKPLYKNSIVPINIDGDKLSINVTDKEYDARTFVFNDKLTFAQLYVLTIATSIKCSKILRDKLLLDQQVAFSTCVLALLVNIGRLNTTINFYLEMTSQLRTFHSVPVLQLHANDPKLLQDTPRLKSILKNLPWGNEQLSLMETYKKVDQNDGEVDTVNKFNIINMLFSICDNSGLIDKRFLSKYVEVESKAQEQDMVDEQNEVKETEAENEKQESKAAYATTLFDILDYSKYEPKDRSNILIWLLYIHLETNLSQEEVEESVRFFNGLEDGAPAGKFILRCTERSYDTDPEDELEFGANQRIKRREFMSKMEEGRKRERTNVTEVKKPSIGGDKSEEDGEGEDDKSEETVEETRSLLTPTPILESSSPMTLNRKKVTPQLPKVTPAAPTETEEEITSAAIIDKNDLNLTPLKKYNSSATVNKVDKLISLDLNKHVSENGKTQEEFLADLKKSQVPNRLKRRDIGLIKIFNEFEDIPVASVLGIRGKKRKKFKDNLLGFETDFMKNLGASKKVLLNKIERAEIDDEEATAMFKLE.

Residues 1–25 are compositionally biased toward basic and acidic residues; that stretch reads MGKRVYDPIHDTFQLREDNSDETKA. The tract at residues 1–133 is disordered; sequence MGKRVYDPIH…RHLKKPDGEP (133 aa). S27 carries the post-translational modification Phosphoserine. The segment covering 28 to 56 has biased composition (polar residues); the sequence is PMQSVKSGSQEEASPSSIQSETETVTTKS. The segment covering 64–80 has biased composition (acidic residues); that stretch reads EIDDKNDDDSTQSEEEN. Residues 97-109 are compositionally biased toward polar residues; it reads GASTATGPVTTNT. Residues 340–385 adopt a coiled-coil conformation; the sequence is SKYVEVESKAQEQDMVDEQNEVKETEAENEKQESKAAYATTLFDIL. The segment covering 465-485 has biased composition (basic and acidic residues); the sequence is FMSKMEEGRKRERTNVTEVKK. The segment at 465–550 is disordered; the sequence is FMSKMEEGRK…VTPAAPTETE (86 aa). Phosphoserine occurs at positions 487, 493, and 504. The span at 493–504 shows a compositional bias: acidic residues; sequence SEEDGEGEDDKS. At T507 the chain carries Phosphothreonine. The segment covering 513-528 has biased composition (polar residues); sequence SLLTPTPILESSSPMT.

In terms of assembly, component of the chromatin-remodeling INO80 complex, at least composed of ARP4, ARP5, ARP8, RVB1, RVB2, TAF14, NHP10, IES1, IES3, IES4, IES6, ACT1, IES2, IES5 and INO80.

The protein resides in the nucleus. In terms of biological role, probably involved in transcription regulation via its interaction with the INO80 complex, a chromatin-remodeling complex. In Saccharomyces cerevisiae (strain ATCC 204508 / S288c) (Baker's yeast), this protein is Ino eighty subunit 1 (IES1).